We begin with the raw amino-acid sequence, 211 residues long: MTIGVVGRKCGMTRIFTEEGVSIPVTVIEIEPNRVTQFKTEETDGYRAVQVTVGERRASRVTAAQAGHFAKANVAAGRTVMEFRLEEGEYQAGDQINAEIFAAGQLVDVTGQSKGKGFQGTIKRWNFRGQDNTHGNSVSHRVPGSIGQCQTPGRVFKGKKMSGHMGAERVTVQSLEVVRVDAERNLLLVKGAVPGATGGNLVVRPAAKARG.

Residue Gln150 is modified to N5-methylglutamine.

This sequence belongs to the universal ribosomal protein uL3 family. As to quaternary structure, part of the 50S ribosomal subunit. Forms a cluster with proteins L14 and L19. Methylated by PrmB.

One of the primary rRNA binding proteins, it binds directly near the 3'-end of the 23S rRNA, where it nucleates assembly of the 50S subunit. This Pseudomonas syringae pv. tomato (strain ATCC BAA-871 / DC3000) protein is Large ribosomal subunit protein uL3.